Reading from the N-terminus, the 282-residue chain is Elongation factor Ts (282 aa).

An involved in Mg(2+) ion dislocation from EF-Tu region spans residues 80-83 (TDFV).

This sequence belongs to the EF-Ts family.

It is found in the cytoplasm. Functionally, associates with the EF-Tu.GDP complex and induces the exchange of GDP to GTP. It remains bound to the aminoacyl-tRNA.EF-Tu.GTP complex up to the GTP hydrolysis stage on the ribosome. The protein is Elongation factor Ts of Chlamydia trachomatis serovar L2b (strain UCH-1/proctitis).